Consider the following 91-residue polypeptide: Small ribosomal subunit protein uS19 (91 aa).

Belongs to the universal ribosomal protein uS19 family.

Its function is as follows. Protein S19 forms a complex with S13 that binds strongly to the 16S ribosomal RNA. The sequence is that of Small ribosomal subunit protein uS19 from Aromatoleum aromaticum (strain DSM 19018 / LMG 30748 / EbN1) (Azoarcus sp. (strain EbN1)).